The sequence spans 222 residues: Gamma-glutamylcyclotransferase and putative RNase MJ0434 (222 aa).

Arg75 is an active-site residue. The RX(4)HXY motif signature appears at 75-82; it reads RDILIRKY. Tyr82 is modified (O-di-AMP-tyrosine).

It in the N-terminal section; belongs to the HepT RNase toxin family. In the C-terminal section; belongs to the gamma-glutamylcyclotransferase family. As to quaternary structure, homodimer, probably forms a complex with cognate antitoxin MJ0435. Post-translationally, modified by cognate antitoxin MJ0435; probably at least 2 successive AMPylation events occur on Tyr-82.

Its function is as follows. Probable toxic component of a putative type VII toxin-antitoxin (TA) system, probably an RNase. Probably neutralized by cognate antitoxin MJ0435. Neutralization may be due to AMPylation by MJ0435. The chain is Gamma-glutamylcyclotransferase and putative RNase MJ0434 from Methanocaldococcus jannaschii (strain ATCC 43067 / DSM 2661 / JAL-1 / JCM 10045 / NBRC 100440) (Methanococcus jannaschii).